We begin with the raw amino-acid sequence, 218 residues long: 3-dehydroquinate dehydratase (218 aa).

3-dehydroquinate-binding positions include 29–31 (EFR) and arginine 56. The active-site Proton donor/acceptor is histidine 116. Lysine 142 serves as the catalytic Schiff-base intermediate with substrate. 3-dehydroquinate-binding residues include arginine 180, serine 200, and glutamine 204.

It belongs to the type-I 3-dehydroquinase family. In terms of assembly, homodimer.

The enzyme catalyses 3-dehydroquinate = 3-dehydroshikimate + H2O. The protein operates within metabolic intermediate biosynthesis; chorismate biosynthesis; chorismate from D-erythrose 4-phosphate and phosphoenolpyruvate: step 3/7. Its function is as follows. Involved in the third step of the chorismate pathway, which leads to the biosynthesis of aromatic amino acids. Catalyzes the cis-dehydration of 3-dehydroquinate (DHQ) and introduces the first double bond of the aromatic ring to yield 3-dehydroshikimate. The chain is 3-dehydroquinate dehydratase from Methanococcus maripaludis (strain C5 / ATCC BAA-1333).